The following is a 96-amino-acid chain: ATP synthase subunit c (96 aa).

2 consecutive transmembrane segments (helical) span residues 24-44 (HVGA…VGVG) and 75-95 (AIAE…IFVA).

It belongs to the ATPase C chain family. F-type ATPases have 2 components, F(1) - the catalytic core - and F(0) - the membrane proton channel. F(1) has five subunits: alpha(3), beta(3), gamma(1), delta(1), epsilon(1). F(0) has three main subunits: a(1), b(2) and c(10-14). The alpha and beta chains form an alternating ring which encloses part of the gamma chain. F(1) is attached to F(0) by a central stalk formed by the gamma and epsilon chains, while a peripheral stalk is formed by the delta and b chains.

Its subcellular location is the cell membrane. Its function is as follows. F(1)F(0) ATP synthase produces ATP from ADP in the presence of a proton or sodium gradient. F-type ATPases consist of two structural domains, F(1) containing the extramembraneous catalytic core and F(0) containing the membrane proton channel, linked together by a central stalk and a peripheral stalk. During catalysis, ATP synthesis in the catalytic domain of F(1) is coupled via a rotary mechanism of the central stalk subunits to proton translocation. Key component of the F(0) channel; it plays a direct role in translocation across the membrane. A homomeric c-ring of between 10-14 subunits forms the central stalk rotor element with the F(1) delta and epsilon subunits. This Mycoplasmoides gallisepticum (strain R(low / passage 15 / clone 2)) (Mycoplasma gallisepticum) protein is ATP synthase subunit c.